A 240-amino-acid chain; its full sequence is Large ribosomal subunit protein uL2 (240 aa).

Residues 1-10 (MGHRISTQSR) show a composition bias toward polar residues. Disordered stretches follow at residues 1–20 (MGHR…YRAP) and 204–240 (FGGG…GYRR).

The protein belongs to the universal ribosomal protein uL2 family. As to quaternary structure, part of the 50S ribosomal subunit. Forms a bridge to the 30S subunit in the 70S ribosome.

Its function is as follows. One of the primary rRNA binding proteins. Required for association of the 30S and 50S subunits to form the 70S ribosome, for tRNA binding and peptide bond formation. It has been suggested to have peptidyltransferase activity; this is somewhat controversial. Makes several contacts with the 16S rRNA in the 70S ribosome. The chain is Large ribosomal subunit protein uL2 from Methanocorpusculum labreanum (strain ATCC 43576 / DSM 4855 / Z).